A 1032-amino-acid polypeptide reads, in one-letter code: Exportin-T (1032 aa).

The protein belongs to the exportin family.

It localises to the nucleus. Its subcellular location is the cytoplasm. Functionally, tRNA nucleus export receptor which facilitates tRNA translocation across the nuclear pore complex. Involved in pre-tRNA splicing, probably by affecting the interaction of pre-tRNA with splicing endonuclease. This Aspergillus fumigatus (strain CBS 144.89 / FGSC A1163 / CEA10) (Neosartorya fumigata) protein is Exportin-T (los1).